The following is a 417-amino-acid chain: MTLSPEKQHVRPRDAADNDPVAVARGLAEKWRATAVERDRAGGSATAEREDLRASGLLSLLVPREYGGWGADWPTAIEVVREIAAADGSLGHLFGYHLTNAPMIELIGSQEQEEHLYTQIAQNNWWTGNASSENNSHVLDWKVSATPTEDGGYVLNGTKHFCSGAKGSDLLFVFGVVQDDSPQQGAIIAAAIPTSRAGVTPNDDWAAIGMRQTDSGSTDFHNVKVEPDEVLGAPNAFVLAFIQSERGSLFAPIAQLIFANVYLGIAHGALDAAREYTRTQARPWTPAGIQQATEDPYTIRSYGEFTIALQGADAAAREAAHLLQTVWDKGDALTPEDRGELMVKVSGVKALATNAALNISSGVFEVIGARGTHPRYGFDRFWRNVRTHSLHDPVSYKIADVGKHTLNGQYPIPGFTS.

Residues Y96, 129 to 134 (NASSEN), 159 to 163 (KHFCS), R282, 369 to 370 (AR), and H391 contribute to the FMN site. Positions 131 to 142 (SSENNSHVLDWK) are lid loop.

This sequence belongs to the DszC flavin monooxygenase family. In terms of assembly, homotetramer. Homodimer. FAD is required as a cofactor. NADH serves as cofactor.

Its subcellular location is the cytoplasm. It carries out the reaction dibenzothiophene + 2 FMNH2 + 2 O2 = dibenzothiophene 5,5-dioxide + 2 FMN + 2 H2O + 2 H(+). The enzyme catalyses dibenzothiophene + FMNH2 + O2 = dibenzothiophene 5-oxide + FMN + H2O + H(+). The catalysed reaction is dibenzothiophene 5-oxide + FMNH2 + O2 = dibenzothiophene 5,5-dioxide + FMN + H2O + H(+). It functions in the pathway sulfur metabolism; dibenzothiophene degradation. Its function is as follows. Catalyzes the first step of the '4S' desulfurization pathway that removes covalently bound sulfur from dibenzothiophene (DBT) without breaking carbon-carbon bonds. Sulfur dioxygenase which converts DBT to DBT-sulfone (DBTO2 or DBT 5,5-dioxide) in a stepwise manner. In DBTO (dibenzothiophene-5-oxide) was reported not to be a substrate, in it is reported to be a substrate. Can also use benzyl sulfide and benzyl sulfoxide as substrates, although benzyl sulfoxide is a poor substrate. The pathway substrate specificity has been augmented using mutagenesis, however no mutations allowed use of alkylated thiophenes. The sequence is that of Dibenzothiophene monooxygenase from Rhodococcus qingshengii.